Here is a 529-residue protein sequence, read N- to C-terminus: Snake venom 5'-nucleotidase (529 aa).

Residue glycine 1 is a signal peptide. Residues aspartate 12 and histidine 14 each contribute to the Zn(2+) site. Cysteines 27 and 32 form a disulfide. Positions 60, 92, 195, and 218 each coordinate Zn(2+). N-linked (GlcNAc...) asparagine glycosylation is found at asparagine 308 and asparagine 322. 2 disulfides stabilise this stretch: cysteine 328–cysteine 333 and cysteine 340–cysteine 362. Arginine 329 serves as a coordination point for AMP. AMP-binding residues include asparagine 365, arginine 370, and phenylalanine 393. Cysteine 452 and cysteine 455 form a disulfide bridge. AMP-binding residues include phenylalanine 476 and aspartate 482. The GPI-anchor amidated serine moiety is linked to residue serine 525. A propeptide spans 526–529 (removed in mature form); that stretch reads AGSL.

It belongs to the 5'-nucleotidase family. Requires Zn(2+) as cofactor. Venom 5'-nucleotidases (or a part thereof) may be released into the venom via exosome-like vesicles. They may be attached via a GPI anchor to the membrane of these vesicles. Soluble forms of 5'-nucleotidase might be released by cleavage of the ectodomain in the exosome-like vesicles or venom gland cells. As to expression, expressed by the venom gland.

Its subcellular location is the membrane. The enzyme catalyses a ribonucleoside 5'-phosphate + H2O = a ribonucleoside + phosphate. Hydrolyzes nucleotides into nucleosides. Snake venom 5'-nucleotidases are widely distributed among venomous snake taxa, but there is a lack of information about their biological activities. They have been shown to inhibit platelet aggregation. This effect may be due to the liberation of inhibitory AMP or adenosine by its action on ADP released upon initiation of aggregation. Venom 5'-nucleotidases are also known to synergistically act in vivo with other toxins like ADPases, phospholipases, and disintegrins to exert a more pronounced anti-coagulant effect. This chain is Snake venom 5'-nucleotidase, found in Naja atra (Chinese cobra).